A 313-amino-acid polypeptide reads, in one-letter code: 7,8-didemethyl-8-hydroxy-5-deazariboflavin synthase (313 aa).

The Radical SAM core domain occupies Ile4 to Asn235. [4Fe-4S] cluster-binding residues include Cys18, Cys22, and Cys25.

It belongs to the radical SAM superfamily. CofG family. Consists of two subunits, CofG and CofH. Requires [4Fe-4S] cluster as cofactor.

It catalyses the reaction 5-amino-5-(4-hydroxybenzyl)-6-(D-ribitylimino)-5,6-dihydrouracil + S-adenosyl-L-methionine = 7,8-didemethyl-8-hydroxy-5-deazariboflavin + 5'-deoxyadenosine + L-methionine + NH4(+) + H(+). Its pathway is cofactor biosynthesis; coenzyme F0 biosynthesis. Functionally, catalyzes the radical-mediated synthesis of 7,8-didemethyl-8-hydroxy-5-deazariboflavin from 5-amino-5-(4-hydroxybenzyl)-6-(D-ribitylimino)-5,6-dihydrouracil. In Synechocystis sp. (strain ATCC 27184 / PCC 6803 / Kazusa), this protein is 7,8-didemethyl-8-hydroxy-5-deazariboflavin synthase.